The following is a 1071-amino-acid chain: DNA-directed RNA polymerase subunit beta (1071 aa).

Belongs to the RNA polymerase beta chain family. As to quaternary structure, in plastids the minimal PEP RNA polymerase catalytic core is composed of four subunits: alpha, beta, beta', and beta''. When a (nuclear-encoded) sigma factor is associated with the core the holoenzyme is formed, which can initiate transcription.

The protein resides in the plastid. It localises to the chloroplast. It catalyses the reaction RNA(n) + a ribonucleoside 5'-triphosphate = RNA(n+1) + diphosphate. Its function is as follows. DNA-dependent RNA polymerase catalyzes the transcription of DNA into RNA using the four ribonucleoside triphosphates as substrates. The protein is DNA-directed RNA polymerase subunit beta of Adiantum capillus-veneris (Maidenhair fern).